The primary structure comprises 307 residues: Fructose-bisphosphate aldolase (307 aa).

Ser-49 is a D-glyceraldehyde 3-phosphate binding site. The active-site Proton donor is Asp-82. The Zn(2+) site is built by His-83, Asp-104, Glu-134, and His-180. Residue Gly-181 participates in dihydroxyacetone phosphate binding. Zn(2+) is bound at residue His-210. Dihydroxyacetone phosphate contacts are provided by residues 211-213 and 253-256; these read GAS and NTDT.

This sequence belongs to the class II fructose-bisphosphate aldolase family. In terms of assembly, homodimer. Requires Zn(2+) as cofactor.

The enzyme catalyses beta-D-fructose 1,6-bisphosphate = D-glyceraldehyde 3-phosphate + dihydroxyacetone phosphate. It functions in the pathway carbohydrate degradation; glycolysis; D-glyceraldehyde 3-phosphate and glycerone phosphate from D-glucose: step 4/4. Functionally, catalyzes the aldol condensation of dihydroxyacetone phosphate (DHAP or glycerone-phosphate) with glyceraldehyde 3-phosphate (G3P) to form fructose 1,6-bisphosphate (FBP) in gluconeogenesis and the reverse reaction in glycolysis. The polypeptide is Fructose-bisphosphate aldolase (fba) (Helicobacter pylori (strain ATCC 700392 / 26695) (Campylobacter pylori)).